We begin with the raw amino-acid sequence, 553 residues long: Membrane protein insertase YidC (553 aa).

A helical membrane pass occupies residues 6–26; the sequence is LIALVLSLLVLVFWEMYFGLF. Positions 34-59 are disordered; the sequence is NKTEQAAPTTTQPATPQTVPPQAATP. Positions 38–59 are enriched in low complexity; that stretch reads QAAPTTTQPATPQTVPPQAATP. A run of 5 helical transmembrane segments spans residues 331 to 351, 360 to 380, 424 to 444, 477 to 497, and 512 to 532; these read LASA…VYVL, NWGV…WPLT, VNPM…FALY, IPYL…MFIQ, and IMMI…SGLV.

The protein belongs to the OXA1/ALB3/YidC family. Type 1 subfamily. As to quaternary structure, interacts with the Sec translocase complex via SecD. Specifically interacts with transmembrane segments of nascent integral membrane proteins during membrane integration.

The protein resides in the cell inner membrane. Required for the insertion and/or proper folding and/or complex formation of integral membrane proteins into the membrane. Involved in integration of membrane proteins that insert both dependently and independently of the Sec translocase complex, as well as at least some lipoproteins. Aids folding of multispanning membrane proteins. The polypeptide is Membrane protein insertase YidC (Syntrophobacter fumaroxidans (strain DSM 10017 / MPOB)).